Consider the following 357-residue polypeptide: Holliday junction branch migration complex subunit RuvB (357 aa).

The span at 1 to 15 shows a compositional bias: low complexity; sequence MAIQSDSLSSLPDSP. Positions 1–30 are disordered; the sequence is MAIQSDSLSSLPDSPRIVAPQPVSPNEESI. The tract at residues 13–195 is large ATPase domain (RuvB-L); it reads DSPRIVAPQP…FGIVSRLEFY (183 aa). ATP-binding positions include Leu34, Arg35, Gly76, Lys79, Thr80, Thr81, 142–144, Arg185, Tyr195, and Arg232; that span reads EDF. Thr80 lines the Mg(2+) pocket. A small ATPAse domain (RuvB-S) region spans residues 196–266; that stretch reads NTDELARIVT…AAGRALAMLD (71 aa). The tract at residues 269-357 is head domain (RuvB-H); it reads PQGLDVMDRK…SGGTGELFSK (89 aa). Positions 305, 324, and 329 each coordinate DNA.

Belongs to the RuvB family. As to quaternary structure, homohexamer. Forms an RuvA(8)-RuvB(12)-Holliday junction (HJ) complex. HJ DNA is sandwiched between 2 RuvA tetramers; dsDNA enters through RuvA and exits via RuvB. An RuvB hexamer assembles on each DNA strand where it exits the tetramer. Each RuvB hexamer is contacted by two RuvA subunits (via domain III) on 2 adjacent RuvB subunits; this complex drives branch migration. In the full resolvosome a probable DNA-RuvA(4)-RuvB(12)-RuvC(2) complex forms which resolves the HJ.

The protein localises to the cytoplasm. The catalysed reaction is ATP + H2O = ADP + phosphate + H(+). Its function is as follows. The RuvA-RuvB-RuvC complex processes Holliday junction (HJ) DNA during genetic recombination and DNA repair, while the RuvA-RuvB complex plays an important role in the rescue of blocked DNA replication forks via replication fork reversal (RFR). RuvA specifically binds to HJ cruciform DNA, conferring on it an open structure. The RuvB hexamer acts as an ATP-dependent pump, pulling dsDNA into and through the RuvAB complex. RuvB forms 2 homohexamers on either side of HJ DNA bound by 1 or 2 RuvA tetramers; 4 subunits per hexamer contact DNA at a time. Coordinated motions by a converter formed by DNA-disengaged RuvB subunits stimulates ATP hydrolysis and nucleotide exchange. Immobilization of the converter enables RuvB to convert the ATP-contained energy into a lever motion, pulling 2 nucleotides of DNA out of the RuvA tetramer per ATP hydrolyzed, thus driving DNA branch migration. The RuvB motors rotate together with the DNA substrate, which together with the progressing nucleotide cycle form the mechanistic basis for DNA recombination by continuous HJ branch migration. Branch migration allows RuvC to scan DNA until it finds its consensus sequence, where it cleaves and resolves cruciform DNA. The sequence is that of Holliday junction branch migration complex subunit RuvB from Bordetella parapertussis (strain 12822 / ATCC BAA-587 / NCTC 13253).